The chain runs to 215 residues: Adenylate kinase (215 aa).

10–15 (GSGKGT) provides a ligand contact to ATP. An NMP region spans residues 30–59 (STGDLFRTNIENDTPLGKEIKQIVENGQLV). Residues Thr31, Arg36, 57–59 (QLV), 85–88 (GFPR), and Gln92 contribute to the AMP site. Residues 121–158 (GRRICQSCCKIFNIYTLPTKEKEICDFCQGILYQRKDD) form an LID region. Residue Arg122 participates in ATP binding. Cys125 and Cys128 together coordinate Zn(2+). 131 to 132 (IF) contacts ATP. 2 residues coordinate Zn(2+): Cys145 and Cys148. Arg155 and Arg166 together coordinate AMP. Lys194 contacts ATP.

It belongs to the adenylate kinase family. In terms of assembly, monomer.

The protein resides in the cytoplasm. The enzyme catalyses AMP + ATP = 2 ADP. Its pathway is purine metabolism; AMP biosynthesis via salvage pathway; AMP from ADP: step 1/1. In terms of biological role, catalyzes the reversible transfer of the terminal phosphate group between ATP and AMP. Plays an important role in cellular energy homeostasis and in adenine nucleotide metabolism. This chain is Adenylate kinase, found in Borrelia recurrentis (strain A1).